The primary structure comprises 385 residues: Serpin-Z1 (385 aa).

Residues Gly-317–Lys-341 are RCL.

It belongs to the serpin family.

In terms of biological role, probable serine protease inhibitor. This is Serpin-Z1 from Arabidopsis thaliana (Mouse-ear cress).